We begin with the raw amino-acid sequence, 303 residues long: Glutamate formimidoyltransferase (303 aa).

The active-site For formimidoyltransferase activity is the His81. 164–172 is a folate binding site; that stretch reads GPSVVGKAG.

This sequence belongs to the formiminotransferase family.

It is found in the cytoplasm. It catalyses the reaction (6S)-5-formyl-5,6,7,8-tetrahydrofolate + L-glutamate = N-formyl-L-glutamate + (6S)-5,6,7,8-tetrahydrofolate + H(+). The catalysed reaction is 5-formimidoyltetrahydrofolate + L-glutamate = N-formimidoyl-L-glutamate + (6S)-5,6,7,8-tetrahydrofolate. It carries out the reaction (6S)-5-formyl-5,6,7,8-tetrahydrofolate + ATP = (6R)-5,10-methenyltetrahydrofolate + ADP + phosphate. It participates in amino-acid degradation; L-histidine degradation into L-glutamate; L-glutamate from N-formimidoyl-L-glutamate (transferase route): step 1/1. Its pathway is one-carbon metabolism; tetrahydrofolate interconversion. Catalyzes the transfer of the formyl group from N-formylglutamate to tetrahydrofolate (THF) to yield 5-formyltetrahydrofolate (5-CHO-THF) and glutamate (Glu). The triglutamate form of 5-CHO-THF (5-CHO-THF-Glu3) can also be used as substrate. It can also catalyze the transfer of the formimino group from N-formiminoglutamate to tetrahydrofolate (THF) to yield 5-formiminotetrahydrofolate (5-NH=CH-THF) and glutamate (Glu). It can replace YgfA to catalyze the irreversible ATP-dependent transformation of 5-CHO-THF to form 5,10-methenyltetrahydrofolate (5,10-CH=THF). The chain is Glutamate formimidoyltransferase from Thermoplasma acidophilum (strain ATCC 25905 / DSM 1728 / JCM 9062 / NBRC 15155 / AMRC-C165).